A 251-amino-acid polypeptide reads, in one-letter code: Mast cell protease 3 (251 aa).

A signal peptide spans 1-17 (MVLFLLLVALLSPAGEA). The propeptide at 18-19 (GK) is activation peptide. The 224-residue stretch at 20–243 (IIGGHEAKPH…FLSWIQRTMR (224 aa)) folds into the Peptidase S1 domain. Cysteine 48 and cysteine 64 are joined by a disulfide. Histidine 63 (charge relay system) is an active-site residue. Residue asparagine 70 is glycosylated (N-linked (GlcNAc...) asparagine). The Charge relay system role is filled by aspartate 107. 2 disulfide bridges follow: cysteine 141-cysteine 207 and cysteine 172-cysteine 186. Residue serine 201 is the Charge relay system of the active site.

It belongs to the peptidase S1 family. Granzyme subfamily.

It localises to the secreted. The protein localises to the cytoplasmic granule. The chain is Mast cell protease 3 from Ovis aries (Sheep).